The following is a 274-amino-acid chain: 2,3,4,5-tetrahydropyridine-2,6-dicarboxylate N-succinyltransferase (274 aa).

Residues R104 and D141 each coordinate substrate.

This sequence belongs to the transferase hexapeptide repeat family. Homotrimer.

The protein resides in the cytoplasm. It carries out the reaction (S)-2,3,4,5-tetrahydrodipicolinate + succinyl-CoA + H2O = (S)-2-succinylamino-6-oxoheptanedioate + CoA. It participates in amino-acid biosynthesis; L-lysine biosynthesis via DAP pathway; LL-2,6-diaminopimelate from (S)-tetrahydrodipicolinate (succinylase route): step 1/3. This is 2,3,4,5-tetrahydropyridine-2,6-dicarboxylate N-succinyltransferase from Shewanella denitrificans (strain OS217 / ATCC BAA-1090 / DSM 15013).